Consider the following 461-residue polypeptide: Cysteine--tRNA ligase (461 aa).

C27 lines the Zn(2+) pocket. The short motif at 29–39 (ITVYDYCHIGH) is the 'HIGH' region element. 3 residues coordinate Zn(2+): C208, H233, and E237. The 'KMSKS' region motif lies at 265–269 (KMSKS). K268 is an ATP binding site.

It belongs to the class-I aminoacyl-tRNA synthetase family. In terms of assembly, monomer. Zn(2+) serves as cofactor.

It localises to the cytoplasm. The catalysed reaction is tRNA(Cys) + L-cysteine + ATP = L-cysteinyl-tRNA(Cys) + AMP + diphosphate. The chain is Cysteine--tRNA ligase from Chromohalobacter salexigens (strain ATCC BAA-138 / DSM 3043 / CIP 106854 / NCIMB 13768 / 1H11).